Here is a 2294-residue protein sequence, read N- to C-terminus: Protein Ycf2 (2294 aa).

1635-1642 (GSIGTGRS) is an ATP binding site.

It belongs to the Ycf2 family.

The protein localises to the plastid. It is found in the chloroplast stroma. Functionally, probable ATPase of unknown function. Its presence in a non-photosynthetic plant (Epifagus virginiana) and experiments in tobacco indicate that it has an essential function which is probably not related to photosynthesis. The protein is Protein Ycf2 of Ranunculus macranthus (Large buttercup).